The following is a 429-amino-acid chain: Serine--tRNA ligase (429 aa).

Position 236 to 238 (236 to 238 (TAE)) interacts with L-serine. An ATP-binding site is contributed by 267–269 (RSE). Residue glutamate 290 coordinates L-serine. Residue 354–357 (EISS) participates in ATP binding. Serine 390 contributes to the L-serine binding site.

It belongs to the class-II aminoacyl-tRNA synthetase family. Type-1 seryl-tRNA synthetase subfamily. In terms of assembly, homodimer. The tRNA molecule binds across the dimer.

The protein localises to the cytoplasm. It catalyses the reaction tRNA(Ser) + L-serine + ATP = L-seryl-tRNA(Ser) + AMP + diphosphate + H(+). The catalysed reaction is tRNA(Sec) + L-serine + ATP = L-seryl-tRNA(Sec) + AMP + diphosphate + H(+). It functions in the pathway aminoacyl-tRNA biosynthesis; selenocysteinyl-tRNA(Sec) biosynthesis; L-seryl-tRNA(Sec) from L-serine and tRNA(Sec): step 1/1. Functionally, catalyzes the attachment of serine to tRNA(Ser). Is also able to aminoacylate tRNA(Sec) with serine, to form the misacylated tRNA L-seryl-tRNA(Sec), which will be further converted into selenocysteinyl-tRNA(Sec). This chain is Serine--tRNA ligase, found in Photorhabdus laumondii subsp. laumondii (strain DSM 15139 / CIP 105565 / TT01) (Photorhabdus luminescens subsp. laumondii).